The sequence spans 417 residues: MTLSPEKEHVRPRDAADNDPVAVARGLAEKWRATAVERDRAGGSATAEREDLRASALLSLLVPREYGGWGADWPTAIEVVREIAAADGSLGHLFGYHLTNAPMIELIGSQEQEEHLYTQIAQNNWWTGNASSENNSHELDVKVSATPTEDGGYVLNGTKHFCSGAKGSDLLFVFGVVQDDSPQQGAIIAAAIPTSRAGVTPNDDWAAIGMRQTDSGSTDFHNVKVEPDEVLGAPNAFVLAFIQSERGSLFRPIAQLIFANVYLGIAHGALDAAREYTRTQARPWTPAGIQQATEDPYTIRSYGEFTIALQGADAAAREAAHLVQTVWDKGDALTPEDRGELMAKVSGVKSLATNAALNISSGVFEVIGARGTHPRYGFDRFWRNVRTHSLHDPVSYKIADVGKHTLNGQYPIPGFTS.

The tract at residues 19–125 (DPVAVARGLA…LYTQIAQNNW (107 aa)) is helical N-terminus. Residues Y96, 129 to 134 (NASSEN), 159 to 163 (KHFCS), R282, 369 to 370 (AR), and H391 contribute to the FMN site. Residues 126-234 (WTGNASSENN…VEPDEVLGAP (109 aa)) are central beta-barrel N-terminus. The tract at residues 131–142 (SSENNSHELDVK) is lid loop. Positions 235–409 (NAFVLAFIQS…DVGKHTLNGQ (175 aa)) are helical C-terminus.

It belongs to the DszC flavin monooxygenase family. As to quaternary structure, homotetramer.

The protein resides in the cytoplasm. It carries out the reaction dibenzothiophene + 2 FMNH2 + 2 O2 = dibenzothiophene 5,5-dioxide + 2 FMN + 2 H2O + 2 H(+). The catalysed reaction is dibenzothiophene + FMNH2 + O2 = dibenzothiophene 5-oxide + FMN + H2O + H(+). It catalyses the reaction dibenzothiophene 5-oxide + FMNH2 + O2 = dibenzothiophene 5,5-dioxide + FMN + H2O + H(+). Its pathway is sulfur metabolism; dibenzothiophene degradation. Its function is as follows. Catalyzes the first step of the '4S' desulfurization pathway that removes covalently bound sulfur from dibenzothiophene (DBT) without breaking carbon-carbon bonds. Sulfur dioxygenase which converts DBT to DBT-sulfone (DBTO2 or DBT 5,5-dioxide) in a stepwise manner. This is Dibenzothiophene monooxygenase from Rhodococcus erythropolis (Arthrobacter picolinophilus).